The primary structure comprises 688 residues: Mitochondrial potassium channel ATP-binding subunit (688 aa).

The transit peptide at 1–31 (MLFHFLQAGLRQCRPPARLVGLETGLSGARG) directs the protein to the mitochondrion. The next 4 membrane-spanning stretches (helical) occupy residues 115 to 135 (PQLIALLTAVLLAFGAALLNI), 168 to 188 (LKLLCLYGAQGLLTCGYIVLL), 268 to 288 (GLLLVVMPVLVGSGALIGSFL), and 342 to 362 (VLGVGIAVFQGLSNVVLNCIV). Residues 121-409 (LTAVLLAFGA…MSVLFGQVVR (289 aa)) form the ABC transmembrane type-1 domain. The region spanning 442–679 (IHFKDVSFSY…GGLYADLIRR (238 aa)) is the ABC transporter domain. An ATP-binding site is contributed by 477–484 (GQSGGGKS).

Belongs to the ABC transporter superfamily. ABCB family. Multidrug resistance exporter (TC 3.A.1.201) subfamily. In terms of assembly, component of the mitochondrial potassium channel (mitoK(ATP)).

The protein resides in the mitochondrion inner membrane. Functionally, ATP-binding subunit of the mitochondrial ATP-gated potassium channel (mitoK(ATP)). Together with pore-forming subunit CCDC51/MITOK of the mitoK(ATP) channel, mediates ATP-dependent potassium currents across the mitochondrial inner membrane. An increase in ATP intracellular levels closes the channel, inhibiting K(+) transport, whereas a decrease in ATP levels enhances K(+) uptake in the mitochondrial matrix. Plays a role in mitochondrial iron transport. Required for maintenance of normal cardiac function, possibly by influencing mitochondrial iron export and regulating the maturation of cytosolic iron sulfur cluster-containing enzymes. The polypeptide is Mitochondrial potassium channel ATP-binding subunit (Xenopus tropicalis (Western clawed frog)).